We begin with the raw amino-acid sequence, 980 residues long: Conserved oligomeric Golgi complex subunit 1 (980 aa).

A2 carries the post-translational modification N-acetylalanine. S7 is subject to Phosphoserine.

Belongs to the COG1 family. As to quaternary structure, component of the conserved oligomeric Golgi complex which is composed of eight different subunits and is required for normal Golgi morphology and localization.

The protein resides in the golgi apparatus membrane. In terms of biological role, required for normal Golgi function. This is Conserved oligomeric Golgi complex subunit 1 (COG1) from Homo sapiens (Human).